Reading from the N-terminus, the 304-residue chain is MVITRDFFLFLSKSGFLNKMARNWGSRIAAGKIIGGNDFNSSIPTIRQLNSQGLSVTVDHLGEFVNSAEVARERTEECIQTIATIADQELNSHVSLKMTSLGLDIDMDLVYENMTKILQTAEKHKIMVTIDMEDEVRCQKTLDIFKDFRKKYEHVSTVLQAYLYRTEKDIDDLDSLNPFLRLVKGAYKESEKVAFPEKSDVDENYKKIIRKQLLNGHYTAIATHDDKMIDFTKQLAKEHGIANDKFEFQMLYGMRSQTQLSLVKEGYNMRVFLPYGEDWYGYFMRRLAERPSNIAFAFKGMTKK.

Lys-97 lines the substrate pocket. Asp-131 is a catalytic residue. Met-132 and Gln-160 together coordinate FAD. The active site involves Arg-181. FAD contacts are provided by residues 184-186 and 223-224; these read KGA and TH. 285-286 is a binding site for substrate; that stretch reads RR.

The protein belongs to the proline dehydrogenase family. The cofactor is FAD.

It carries out the reaction L-proline + a quinone = (S)-1-pyrroline-5-carboxylate + a quinol + H(+). The protein operates within amino-acid degradation; L-proline degradation into L-glutamate; L-glutamate from L-proline: step 1/2. Converts proline to delta-1-pyrroline-5-carboxylate. This Bacillus subtilis subsp. natto protein is Proline dehydrogenase 2.